The primary structure comprises 172 residues: Large ribosomal subunit protein bL17 (172 aa).

The tract at residues 123–172 (ATGSKRAQTEEAASQEPAAEAGKQPAEGATSVQTAEAADASQAEGEAEEK) is disordered. The span at 132-143 (EEAASQEPAAEA) shows a compositional bias: low complexity.

This sequence belongs to the bacterial ribosomal protein bL17 family. As to quaternary structure, part of the 50S ribosomal subunit. Contacts protein L32.

In Thermobifida fusca (strain YX), this protein is Large ribosomal subunit protein bL17.